The primary structure comprises 372 residues: Queuine tRNA-ribosyltransferase (372 aa).

Catalysis depends on D89, which acts as the Proton acceptor. Substrate contacts are provided by residues 89–93 (DSGGF), D161, and G232. The interval 262–268 (GIGDLPS) is RNA binding. Catalysis depends on D281, which acts as the Nucleophile. The interval 286 to 290 (TKAAR) is RNA binding; important for wobble base 34 recognition. C319, C321, C324, and H351 together coordinate Zn(2+).

Belongs to the queuine tRNA-ribosyltransferase family. As to quaternary structure, homodimer. Within each dimer, one monomer is responsible for RNA recognition and catalysis, while the other monomer binds to the replacement base PreQ1. The cofactor is Zn(2+).

It carries out the reaction 7-aminomethyl-7-carbaguanine + guanosine(34) in tRNA = 7-aminomethyl-7-carbaguanosine(34) in tRNA + guanine. The protein operates within tRNA modification; tRNA-queuosine biosynthesis. Its function is as follows. Catalyzes the base-exchange of a guanine (G) residue with the queuine precursor 7-aminomethyl-7-deazaguanine (PreQ1) at position 34 (anticodon wobble position) in tRNAs with GU(N) anticodons (tRNA-Asp, -Asn, -His and -Tyr). Catalysis occurs through a double-displacement mechanism. The nucleophile active site attacks the C1' of nucleotide 34 to detach the guanine base from the RNA, forming a covalent enzyme-RNA intermediate. The proton acceptor active site deprotonates the incoming PreQ1, allowing a nucleophilic attack on the C1' of the ribose to form the product. After dissociation, two additional enzymatic reactions on the tRNA convert PreQ1 to queuine (Q), resulting in the hypermodified nucleoside queuosine (7-(((4,5-cis-dihydroxy-2-cyclopenten-1-yl)amino)methyl)-7-deazaguanosine). In Chlamydia trachomatis serovar A (strain ATCC VR-571B / DSM 19440 / HAR-13), this protein is Queuine tRNA-ribosyltransferase.